The sequence spans 339 residues: Cyclic AMP-dependent transcription factor ATF-4 (339 aa).

Disordered regions lie at residues 14–62 (GPWP…PSEL), 153–182 (PEEI…HTEV), and 209–313 (QNIS…EKAD). The segment covering 35 to 55 (VLEGSWSPSSSSLSSFSPPAS) has biased composition (low complexity). The segment covering 162 to 173 (SPAPSVPSPPEE) has biased composition (pro residues). Residues 211–226 (ISDCSDSDSGISVSGS) show a composition bias toward low complexity. The segment covering 231-247 (SDLEPSSRAKPYSRPDP) has biased composition (basic and acidic residues). Positions 266-329 (VEKKLKKMEQ…QYLRDLLEEM (64 aa)) constitute a bZIP domain. The interval 268-288 (KKLKKMEQNKTAATRYRQKKR) is basic motif. Positions 294 to 322 (LNSECSELEKKNRELSEKADSLSREIQYL) are leucine-zipper. Over residues 300 to 313 (ELEKKNRELSEKAD) the composition is skewed to basic and acidic residues.

The protein belongs to the bZIP family. In terms of assembly, binds DNA as a homodimer and as a heterodimer.

It localises to the nucleus. Its function is as follows. Transcription factor that binds the cAMP response element (CRE) (consensus: 5'-GTGACGT[AC][AG]-3') and displays two biological functions, as regulator of metabolic and redox processes under normal cellular conditions, and as master transcription factor during integrated stress response (ISR). Binds to asymmetric CRE's as a heterodimer and to palindromic CRE's as a homodimer. Core effector of the ISR, which is required for adaptation to various stress such as endoplasmic reticulum (ER) stress, amino acid starvation, mitochondrial stress or oxidative stress. During ISR, atf4 translation is induced via an alternative ribosome translation re-initiation mechanism in response to eif2s1/eIF-2-alpha phosphorylation, and stress-induced atf4 acts as a master transcription factor of stress-responsive genes in order to promote cell recovery. Promotes the transcription of genes linked to amino acid sufficiency and resistance to oxidative stress to protect cells against metabolic consequences of ER oxidation. In the absence of stress, atf4 translation is at low levels and it is required for normal metabolic processes such as embryonic lens formation, fetal liver hematopoiesis, bone development and synaptic plasticity. Acts as a regulator of osteoblast differentiation by promoting expression of osteoblast-specific genes. Regulates the circadian expression of the core clock components. Mainly acts as a transcriptional activator in cellular stress adaptation, but it can also act as a transcriptional repressor. This Danio rerio (Zebrafish) protein is Cyclic AMP-dependent transcription factor ATF-4 (atf4).